Here is a 117-residue protein sequence, read N- to C-terminus: Large ribosomal subunit protein bL20 (117 aa).

This sequence belongs to the bacterial ribosomal protein bL20 family.

Binds directly to 23S ribosomal RNA and is necessary for the in vitro assembly process of the 50S ribosomal subunit. It is not involved in the protein synthesizing functions of that subunit. This Rickettsia peacockii (strain Rustic) protein is Large ribosomal subunit protein bL20.